A 470-amino-acid polypeptide reads, in one-letter code: FLYWCH transcription factor 2 (470 aa).

A disordered region spans residues 102 to 148 (SQLISEDTRPSASSSPSSTATAVSNSGQSNATSTSSSSTEPEYKPRN). Residues 111 to 140 (PSASSSPSSTATAVSNSGQSNATSTSSSST) show a composition bias toward low complexity. The segment at 145–204 (KPRNVREKVYADGYIMSFDKKSCCGTKEFWRCERKNDCNARMHSDINTREIVRKLHPHNH) adopts an FLYWCH-type zinc-finger fold.

In terms of biological role, probable transcription factor. May bind to the promoters of target genes, including micro-RNA genes, in order to repress expression, and acting redundantly with flh-1 and flh-3. This is FLYWCH transcription factor 2 from Caenorhabditis elegans.